The sequence spans 86 residues: YcgL domain-containing protein XCV4171 (86 aa).

The 83-residue stretch at 1–83 folds into the YcgL domain; that stretch reads MHAYVYKSQR…PKTIVLAGEC (83 aa).

This Xanthomonas euvesicatoria pv. vesicatoria (strain 85-10) (Xanthomonas campestris pv. vesicatoria) protein is YcgL domain-containing protein XCV4171.